We begin with the raw amino-acid sequence, 665 residues long: Fructose-1,6-bisphosphatase class 3 (665 aa).

This sequence belongs to the FBPase class 3 family. The cofactor is Mn(2+).

The enzyme catalyses beta-D-fructose 1,6-bisphosphate + H2O = beta-D-fructose 6-phosphate + phosphate. It participates in carbohydrate biosynthesis; gluconeogenesis. The protein is Fructose-1,6-bisphosphatase class 3 of Alkaliphilus metalliredigens (strain QYMF).